The following is a 166-amino-acid chain: Regulatory protein RecX (166 aa).

Belongs to the RecX family.

It is found in the cytoplasm. Modulates RecA activity. This Salmonella arizonae (strain ATCC BAA-731 / CDC346-86 / RSK2980) protein is Regulatory protein RecX.